The following is a 334-amino-acid chain: UL-16 binding protein 5 (334 aa).

Positions 1-25 (MAAAASPAFLLRLPLLLLLSSWCRT) are cleaved as a signal peptide. At 26 to 223 (GLADPHSLCY…TMSSGTAQPR (198 aa)) the chain is on the extracellular side. The tract at residues 29 to 117 (DPHSLCYDIT…IQLENYIPKE (89 aa)) is MHC class I alpha-1 like. A disulfide bridge connects residues Cys50 and Cys66. Asn82 carries an N-linked (GlcNAc...) asparagine glycan. Positions 118–210 (PLTLQARMSC…MDSTLEPSAG (93 aa)) are MHC class I alpha-2 like. A disulfide bridge links Cys127 with Cys190. Residue Gly218 is the site of GPI-anchor amidated glycine attachment. Residues 219–334 (TAQPRATATT…YSEPLQVSIS (116 aa)) constitute a propeptide, removed in mature form. The helical transmembrane segment at 224–243 (ATATTLILCCLLIMCLLICS) threads the bilayer. Residues 244 to 334 (RHSLTQSHGH…YSEPLQVSIS (91 aa)) lie on the Cytoplasmic side of the membrane.

This sequence belongs to the MHC class I family. Interacts with KLRK1/NKG2D. In terms of assembly, (Microbial infection) In CMV-infected cells, interacts with the viral glycoprotein UL16; this interaction causes RAET1G retention in the endoplasmic reticulum and cis-Golgi and prevents binding to and activation of KLRK1/NKG2D, providing CMV with an immune evasion mechanism. The functional form is cleaved C-terminally of the GPI-anchor and yields a 28 kDa protein. As to expression, isoform 1 is highly expressed in colon and in a number of tumor cell lines and highly restricted in normal tissues. Both isoforms are frequently expressed in cell lines derived from epithelial cancers, and in primary breast cancers.

It is found in the cell membrane. Its subcellular location is the endoplasmic reticulum. It localises to the secreted. Binds and activates the KLRK1/NKG2D receptor, mediating natural killer cell cytotoxicity. Functionally, down-regulates the expression of KLRK1 and stimulates natural killer cells to secrete IFNG. Its function is as follows. Stimulates natural killer cells to secrete IFNG. In Homo sapiens (Human), this protein is UL-16 binding protein 5.